We begin with the raw amino-acid sequence, 812 residues long: Outer membrane usher protein FaeD (812 aa).

The signal sequence occupies residues 1-35 (MKKYVTTKSVQPVAFRLTTLSLVMSAVLGSASVIA). Cys-793 and Cys-811 are joined by a disulfide.

Belongs to the fimbrial export usher family.

It localises to the cell outer membrane. Functionally, involved in the export and assembly of K88ab fimbrial subunits across the outer membrane. This chain is Outer membrane usher protein FaeD (faeD), found in Escherichia coli.